A 935-amino-acid chain; its full sequence is Intimin (935 aa).

An N-terminal signal peptide occupies residues 1 to 41; it reads MITHGFYARTRHKHKLKKTFIMLSAGLGLFFYVNQNSFANG. Positions 40-153 are peptidoglycan-binding; the sequence is NGENYFKLSS…KMTKMSPDAT (114 aa). The sufficient for homodimerization stretch occupies residues 40 to 153; that stretch reads NGENYFKLSS…KMTKMSPDAT (114 aa). Residues 40–212 are required for periplasmic localization; it reads NGENYFKLSS…LQAWLQHYGT (173 aa). The LysM domain occupies 63–112; sequence LFYTLKTGETVSSISKSQGISLSVIWSLNKHLYSSESEMLKAAPGQQIIL. The tract at residues 210-411 is inverse autotransporter; that stretch reads YGTAEVNLQS…LYSMQFRYQF (202 aa). Residues 402–411 are signature sequence for beta-barrel assembly machinery (BAM), which recognizes the unfolded beta-barrel in the periplasm; the sequence is LYSMQFRYQF. 2 consecutive Big-1 domains span residues 560 to 653 and 660 to 754; these read VTDF…VIFV and ITEI…VTFF. The region spanning 790–834 is the BIG2 domain; the sequence is GGNGTYSWHSENTNIATVDESGKVTLKGKGTAVINVTSGDKQTVS. C859 and C933 are oxidised to a cystine.

The protein belongs to the intimin/invasin family. In terms of assembly, homodimer. Interacts with Tir.

Its subcellular location is the cell outer membrane. Functionally, an inverse autotransporter. Adhesin, which mediates attachment to the human intestine epithelial cells. Necessary for the production of attaching and effacing lesions on infected human tissue culture cells. Anchored to the outer membrane by binding to peptidoglycan (PGN) via its periplasmic domain, thus helping in receptor interactions during host invasion. PGN-binding may also aid in resisting mechanical and chemical stress during transit of the bacterium through the gastrointestinal tract of the host. The polypeptide is Intimin (eae) (Escherichia coli O111:H-).